The following is a 428-amino-acid chain: Cysteine--tRNA ligase (428 aa).

C23 lines the Zn(2+) pocket. The 'HIGH' region motif lies at 25–35 (PTVYNDLHLGN). Zn(2+) contacts are provided by C196, H221, and E225. The short motif at 253-257 (KMSKS) is the 'KMSKS' region element. Position 256 (K256) interacts with ATP.

It belongs to the class-I aminoacyl-tRNA synthetase family. In terms of assembly, monomer. The cofactor is Zn(2+).

Its subcellular location is the cytoplasm. It carries out the reaction tRNA(Cys) + L-cysteine + ATP = L-cysteinyl-tRNA(Cys) + AMP + diphosphate. This is Cysteine--tRNA ligase (cysS) from Mycoplasma genitalium (strain ATCC 33530 / DSM 19775 / NCTC 10195 / G37) (Mycoplasmoides genitalium).